Consider the following 497-residue polypeptide: Glycine receptor subunit beta (497 aa).

The signal sequence occupies residues 1 to 22 (MKFLLTTAFLILISLWVEEAYS). At 23–268 (KEKSSKKGKG…IFTLRRQVGF (246 aa)) the chain is on the extracellular side. Asn-54 carries an N-linked (GlcNAc...) asparagine glycan. Glycine contacts are provided by Arg-108 and Ser-174. Cys-183 and Cys-197 are joined by a disulfide. Asn-242 is a glycosylation site (N-linked (GlcNAc...) asparagine). Residues Cys-243 and Cys-255 are joined by a disulfide bond. Position 250 (Thr-250) interacts with glycine. The chain crosses the membrane as a helical span at residues 269-289 (YMMGVYAPTLLIVVLSWLSFW). The Cytoplasmic portion of the chain corresponds to 290 to 294 (INPDA). Residues 295 to 315 (SAARVPLGIFSVLSLASECTT) traverse the membrane as a helical segment. Residues 316–327 (LAAELPKVSYVK) are Extracellular-facing. A helical transmembrane segment spans residues 328-349 (ALDVWLIACLLFGFASLVEYAV). Over 350–472 (VQVMLNNPKR…KPVIPTAAKR (123 aa)) the chain is Cytoplasmic. Thr-391 is subject to Phosphothreonine. A helical transmembrane segment spans residues 473–496 (IDLYARALFPFCFLFFNVIYWSIY).

This sequence belongs to the ligand-gated ion channel (TC 1.A.9) family. Glycine receptor (TC 1.A.9.3) subfamily. GLRB sub-subfamily. As to quaternary structure, forms heteropentamers with glycin receptor alpha subunits. Heteropentamers with GLRA1 can be composed of two GLRA1 and three GLRB subunits, or three GLRA1 and two GLRB subunits, or four GLRA1 subunits and one GLRB subunit. Forms heteropentamers with GLRA2. Functional GLRB-GLRA2 heteropentamers contain four GLRA2 subunits and one GLRB subunit, although alternative subunit composition cannot be excluded. Forms a heteropentamer with GLRA3. Interacts with GPHN.

It localises to the postsynaptic cell membrane. The protein resides in the synapse. It is found in the cell projection. The protein localises to the dendrite. Its subcellular location is the cell membrane. It localises to the cytoplasm. It carries out the reaction chloride(in) = chloride(out). Channel opening is triggered by extracellular glycine. Heteropentameric channels composed of GLRB and GLRA1 are activated by lower glycine levels than homopentameric GLRA1. Functionally, subunit of heteromeric glycine-gated chloride channels. Plays an important role in the down-regulation of neuronal excitability. Contributes to the generation of inhibitory postsynaptic currents. This is Glycine receptor subunit beta (GLRB) from Homo sapiens (Human).